We begin with the raw amino-acid sequence, 313 residues long: Small glutamine-rich tetratricopeptide repeat-containing protein alpha (313 aa).

A disordered region spans residues 66 to 100 (ATGKEMPQDLRSPARTPPSEEDSAEAERLKTEGNE). Phosphoserine is present on Ser-77. Phosphothreonine is present on Thr-81. Position 84 is a phosphoserine (Ser-84). Over residues 90-100 (EAERLKTEGNE) the composition is skewed to basic and acidic residues. 3 TPR repeats span residues 91–124 (AERL…NPAN), 125–158 (AVYF…DPAY), and 159–192 (SKAY…DPDN). The residue at position 137 (Lys-137) is an N6-acetyllysine. The interval 250-269 (MISGGNNPLGTPGTSPSQND) is disordered. Ser-301 is subject to Phosphoserine. Thr-303 bears the Phosphothreonine mark. Phosphoserine is present on Ser-305.

This sequence belongs to the SGT family. In terms of assembly, homodimer. Homooligomer. Interacts with DNAJC5 and DNAJC5B. Interacts (via TPR repeats) with HSP90AA1. Interacts (via Gln-rich region) with SLC2A1. Interacts with HSP90AB1. Interacts (via TPR repeats) with HSPA8/Hsc70; the interaction is direct. Interacts with BAG6 (via ubiquitin-like domain); interaction prevents interaction between BAG6 and RNF126. Forms a multiprotein complex, at least composed of DNAJB12, DNAJB14, HSPA8/Hsc70 and SGTA; interaction with DNAJB14 and HSPA8/Hsc70 is direct. As to quaternary structure, (Microbial infection) Interacts with Vpu and Gag from HIV-1. (Microbial infection) Interacts with SARS-CoV accessory protein 7a. As to expression, ubiquitous.

It is found in the cytoplasm. It localises to the nucleus. Functionally, co-chaperone that binds misfolded and hydrophobic patches-containing client proteins in the cytosol. Mediates their targeting to the endoplasmic reticulum but also regulates their sorting to the proteasome when targeting fails. Functions in tail-anchored/type II transmembrane proteins membrane insertion constituting with ASNA1 and the BAG6 complex a targeting module. Functions upstream of the BAG6 complex and ASNA1, binding more rapidly the transmembrane domain of newly synthesized proteins. It is also involved in the regulation of the endoplasmic reticulum-associated misfolded protein catabolic process via its interaction with BAG6: collaborates with the BAG6 complex to maintain hydrophobic substrates in non-ubiquitinated states. Competes with RNF126 for interaction with BAG6, preventing the ubiquitination of client proteins associated with the BAG6 complex. Binds directly to HSC70 and HSP70 and regulates their ATPase activity. In terms of biological role, (Microbial infection) In case of infection by polyomavirus, involved in the virus endoplasmic reticulum membrane penetration and infection via interaction with DNAJB12, DNAJB14 and HSPA8/Hsc70. This Homo sapiens (Human) protein is Small glutamine-rich tetratricopeptide repeat-containing protein alpha (SGTA).